The chain runs to 160 residues: MRLSVIAIGRLKQGPERELAERYRERFDETGRKLGFRGLEVHEIAESRARDVPTRMAEEAAAMVALVPERAMLVAMDERGQNLDSIGFAQKLAGWRDQSVPQTIFLIGGADGLSPELRRKAKLSVSFGAATWPHQMLRVMLLEQIYRAATILAGHPYHRA.

Gly-108 serves as a coordination point for S-adenosyl-L-methionine.

Belongs to the RNA methyltransferase RlmH family. As to quaternary structure, homodimer.

Its subcellular location is the cytoplasm. The catalysed reaction is pseudouridine(1915) in 23S rRNA + S-adenosyl-L-methionine = N(3)-methylpseudouridine(1915) in 23S rRNA + S-adenosyl-L-homocysteine + H(+). Its function is as follows. Specifically methylates the pseudouridine at position 1915 (m3Psi1915) in 23S rRNA. The sequence is that of Ribosomal RNA large subunit methyltransferase H from Rhodopseudomonas palustris (strain BisA53).